The primary structure comprises 179 residues: Large ribosomal subunit protein uL5 (179 aa).

This sequence belongs to the universal ribosomal protein uL5 family. Part of the 50S ribosomal subunit; part of the 5S rRNA/L5/L18/L25 subcomplex. Contacts the 5S rRNA and the P site tRNA. Forms a bridge to the 30S subunit in the 70S ribosome.

In terms of biological role, this is one of the proteins that bind and probably mediate the attachment of the 5S RNA into the large ribosomal subunit, where it forms part of the central protuberance. In the 70S ribosome it contacts protein S13 of the 30S subunit (bridge B1b), connecting the 2 subunits; this bridge is implicated in subunit movement. Contacts the P site tRNA; the 5S rRNA and some of its associated proteins might help stabilize positioning of ribosome-bound tRNAs. This chain is Large ribosomal subunit protein uL5, found in Xylella fastidiosa (strain M23).